Here is a 479-residue protein sequence, read N- to C-terminus: Wax ester synthase/diacylglycerol acyltransferase 2 (479 aa).

Residues 1–182 (MAIERQVTEA…VAPKKNKAKN (182 aa)) lie on the Cytoplasmic side of the membrane. H144 (proton acceptor) is an active-site residue. The chain crosses the membrane as a helical span at residues 183–199 (VCFSLVAWLWFIVRLMF). Residues 200–479 (HTCVEVIKSI…PKKVFHASKV (280 aa)) are Lumenal-facing. An N-linked (GlcNAc...) asparagine glycan is attached at N253.

It in the N-terminal section; belongs to the long-chain O-acyltransferase family. Mostly expressed in flowers and siliques and barely in roots and stems.

The protein resides in the cell membrane. It localises to the endoplasmic reticulum membrane. The catalysed reaction is an acyl-CoA + a 1,2-diacyl-sn-glycerol = a triacyl-sn-glycerol + CoA. It catalyses the reaction a long chain fatty alcohol + a fatty acyl-CoA = a wax ester + CoA. Its pathway is glycerolipid metabolism; triacylglycerol biosynthesis. It functions in the pathway lipid metabolism. In terms of biological role, bifunctional wax ester synthase/diacylglycerol acyltransferase. Involved in cuticular wax biosynthesis. The polypeptide is Wax ester synthase/diacylglycerol acyltransferase 2 (Arabidopsis thaliana (Mouse-ear cress)).